The following is a 184-amino-acid chain: ATP synthase subunit b, chloroplastic (184 aa).

The helical transmembrane segment at 31 to 53 (LINLAVVIGVLVYFGKGVLTTIL) threads the bilayer.

The protein belongs to the ATPase B chain family. As to quaternary structure, F-type ATPases have 2 components, F(1) - the catalytic core - and F(0) - the membrane proton channel. F(1) has five subunits: alpha(3), beta(3), gamma(1), delta(1), epsilon(1). F(0) has four main subunits: a(1), b(1), b'(1) and c(10-14). The alpha and beta chains form an alternating ring which encloses part of the gamma chain. F(1) is attached to F(0) by a central stalk formed by the gamma and epsilon chains, while a peripheral stalk is formed by the delta, b and b' chains.

The protein resides in the plastid. It is found in the chloroplast thylakoid membrane. F(1)F(0) ATP synthase produces ATP from ADP in the presence of a proton or sodium gradient. F-type ATPases consist of two structural domains, F(1) containing the extramembraneous catalytic core and F(0) containing the membrane proton channel, linked together by a central stalk and a peripheral stalk. During catalysis, ATP synthesis in the catalytic domain of F(1) is coupled via a rotary mechanism of the central stalk subunits to proton translocation. Functionally, component of the F(0) channel, it forms part of the peripheral stalk, linking F(1) to F(0). The sequence is that of ATP synthase subunit b, chloroplastic from Staurastrum punctulatum (Green alga).